We begin with the raw amino-acid sequence, 1251 residues long: Cyclic nucleotide-gated channel beta-1 (1251 aa).

Disordered stretches follow at residues 1-75 (MLGW…QETK), 121-151 (ITEDPAQILGHGSTGDTGCTDEPNEALEAQD), 172-252 (QPPK…TRDP), and 314-561 (EDAH…STNS). Residues 1 to 656 (MLGWVQRVLP…SIDPLTNLMY (656 aa)) are Cytoplasmic-facing. Residues 23–50 (EEEEVEPEPEMEAEVEPEPNPEEAETES) show a composition bias toward acidic residues. Over residues 238 to 247 (GSQAQTSSLP) the composition is skewed to polar residues. Positions 335–352 (EENKAVEKMPRELSRIEE) are enriched in basic and acidic residues. Residues 353 to 373 (EKEDEEEEEEEEEEEEEEEVT) are compositionally biased toward acidic residues. The segment covering 404-423 (KLWEEVGEEAKKEAEEKAKE) has biased composition (basic and acidic residues). Over residues 424 to 434 (EAEEVAEEEAE) the composition is skewed to acidic residues. A compositionally biased stretch (basic and acidic residues) spans 435–446 (KEPQDWAETKEE). The segment at 557 to 567 (ASTNSAIINDR) is calmodulin-binding CaM1. The IQ-like signature appears at 568-578 (LQELVKLFKER). The tract at residues 585 to 619 (KLIDPDVTSDEESPKPSPAKKAPEPAPDTKPAEAE) is disordered. A helical membrane pass occupies residues 657–678 (VLWLFFVVMAWNWNCWLIPVRW). Residues 679–687 (AFPYQTPDN) lie on the Extracellular side of the membrane. A helical transmembrane segment spans residues 688–709 (IHHWLLMDYLCDLIYFLDITVF). Over 710-724 (QTRLQFVRGGDIITD) the chain is Cytoplasmic. A helical transmembrane segment spans residues 725–744 (KKDMRNNYLKSRRFKMDLLS). The Extracellular portion of the chain corresponds to 745–760 (LLPLDFLYLKVGVNPL). A helical transmembrane segment spans residues 761 to 773 (LRLPRCLKYMAFF). The Cytoplasmic segment spans residues 774 to 785 (EFNSRLESILSK). A helical membrane pass occupies residues 786-808 (AYVYRVIRTTAYLLYSLHLNSCL). The tract at residues 786 to 885 (AYVYRVIRTT…IGQMRDVVGA (100 aa)) is ion conduction pathway. The Extracellular portion of the chain corresponds to 809–831 (YYWASAYQGLGSTHWVYDGVGNS). 2 consecutive transmembrane segments (helical) span residues 832 to 858 (YIRCYYFAVKTLITIGGLPDPKTLFEI) and 859 to 884 (VFQLLNYFTGVFAFSVMIGQMRDVVG). Residues 885 to 1251 (AATAGQTYYR…MPEEREEKAE (367 aa)) are Cytoplasmic-facing. Positions 888 to 964 (AGQTYYRSCM…NIVSKVALFQ (77 aa)) are C-linker. The cyclic nucleotide-binding domain stretch occupies residues 968-1084 (RQMIFDMLKR…LLRKKARRML (117 aa)). 3',5'-cyclic GMP contacts are provided by G1029, E1030, S1032, R1042, and T1043. R1042 is a 3',5'-cyclic AMP binding site. Positions 1148–1154 (QQELVEQ) are calmodulin-binding CaM2. Positions 1151-1251 (LVEQAKSSQD…MPEEREEKAE (101 aa)) are disordered. A compositionally biased stretch (pro residues) spans 1183-1203 (PPAPRTPPEPPGSPPSSPPPA). Positions 1242 to 1251 (MPEEREEKAE) are enriched in basic and acidic residues.

The protein belongs to the cyclic nucleotide-gated cation channel (TC 1.A.1.5) family. CNGB1 subfamily. The rod cyclic nucleotide-gated channel is a heterotetramer composed of CNGA1 and CNGB1 subunits with 3:1 stoichiometry. CNGA1:CNGB1 channel binds Ca(2+)-bound CALM1 via CaM1 and CaM2 regions of the CNGB1 subunit; this interaction modulates the affinity of the channel for cNMPs in response to intracellular Ca(2+) levels. The olfactory cyclic nucleotide-gated channel is a heterotetramer composed of CNGA2, CNGA4 and CNGB1 subunits with 2:1:1 stoichiometry.

The protein localises to the cell membrane. The protein resides in the cell projection. Its subcellular location is the cilium membrane. It carries out the reaction Ca(2+)(in) = Ca(2+)(out). It catalyses the reaction Na(+)(in) = Na(+)(out). The enzyme catalyses K(+)(in) = K(+)(out). The catalysed reaction is NH4(+)(in) = NH4(+)(out). It carries out the reaction Rb(+)(in) = Rb(+)(out). It catalyses the reaction Li(+)(in) = Li(+)(out). The enzyme catalyses Cs(+)(in) = Cs(+)(out). Its function is as follows. Pore-forming subunit of the rod cyclic nucleotide-gated channel. Mediates rod photoresponses at dim light converting transient changes in intracellular cGMP levels into electrical signals. In the dark, cGMP levels are high and keep the channel open enabling a steady inward current carried by Na(+) and Ca(2+) ions that leads to membrane depolarization and neurotransmitter release from synaptic terminals. Upon photon absorption cGMP levels decline leading to channel closure and membrane hyperpolarization that ultimately slows neurotransmitter release and signals the presence of light, the end point of the phototransduction cascade. Pore-forming subunit of the olfactory cyclic nucleotide-gated channel. Operates in the cilia of olfactory sensory neurons where chemical stimulation of the odorant is converted to an electrical signal. Mediates odorant-induced cAMP-dependent Ca(2+) influx triggering neuron depolarization. The rise of intracellular Ca(2+) levels potentiates the olfactory response by activating Ca(2+)-dependent Cl(-) channels, but it also serves as a negative feedback signal to desensitize the channel for rapid adaptation to odorants. Conducts cGMP- and cAMP-gated ion currents, with permeability for monovalent and divalent cations. The selectivity for Ca(2+) over Na(+) increases with cGMP concentrations, whereas the selectivity among monovalent ions is independent of the cGMP levels. Functionally, high affinity rod photoreceptor phosphodiesterase (PDE6)-binding protein that modulates its catalytic properties: it is a regulator of spontaneous activation of rod PDE6, thereby serving to lower rod photoreceptor 'dark noise' and allowing these sensory cells to operate at the single photon detection limit. The sequence is that of Cyclic nucleotide-gated channel beta-1 from Homo sapiens (Human).